The primary structure comprises 136 residues: uncharacterized protein (136 aa).

The first 19 residues, 1–19 (MKKLLMVILGIALIGMAYA), serve as a signal peptide directing secretion.

This is an uncharacterized protein from Methanocaldococcus jannaschii (strain ATCC 43067 / DSM 2661 / JAL-1 / JCM 10045 / NBRC 100440) (Methanococcus jannaschii).